The chain runs to 88 residues: Small ribosomal subunit protein uS17 (88 aa).

This sequence belongs to the universal ribosomal protein uS17 family. In terms of assembly, part of the 30S ribosomal subunit.

One of the primary rRNA binding proteins, it binds specifically to the 5'-end of 16S ribosomal RNA. In Lactobacillus acidophilus (strain ATCC 700396 / NCK56 / N2 / NCFM), this protein is Small ribosomal subunit protein uS17.